The following is a 406-amino-acid chain: Imidazolonepropionase (406 aa).

Fe(3+) contacts are provided by histidine 75 and histidine 77. The Zn(2+) site is built by histidine 75 and histidine 77. 3 residues coordinate 4-imidazolone-5-propanoate: arginine 84, tyrosine 147, and histidine 180. Residue tyrosine 147 coordinates N-formimidoyl-L-glutamate. Histidine 245 contributes to the Fe(3+) binding site. Residue histidine 245 participates in Zn(2+) binding. Glutamine 248 lines the 4-imidazolone-5-propanoate pocket. A Fe(3+)-binding site is contributed by aspartate 320. Aspartate 320 contributes to the Zn(2+) binding site. Positions 322 and 324 each coordinate N-formimidoyl-L-glutamate. Residue threonine 325 participates in 4-imidazolone-5-propanoate binding.

The protein belongs to the metallo-dependent hydrolases superfamily. HutI family. Zn(2+) serves as cofactor. Requires Fe(3+) as cofactor.

It is found in the cytoplasm. It carries out the reaction 4-imidazolone-5-propanoate + H2O = N-formimidoyl-L-glutamate. It participates in amino-acid degradation; L-histidine degradation into L-glutamate; N-formimidoyl-L-glutamate from L-histidine: step 3/3. Functionally, catalyzes the hydrolytic cleavage of the carbon-nitrogen bond in imidazolone-5-propanoate to yield N-formimidoyl-L-glutamate. It is the third step in the universal histidine degradation pathway. The polypeptide is Imidazolonepropionase (Hyphomonas neptunium (strain ATCC 15444)).